Reading from the N-terminus, the 688-residue chain is Glycine--tRNA ligase beta subunit (688 aa).

Belongs to the class-II aminoacyl-tRNA synthetase family. As to quaternary structure, tetramer of two alpha and two beta subunits.

It is found in the cytoplasm. The enzyme catalyses tRNA(Gly) + glycine + ATP = glycyl-tRNA(Gly) + AMP + diphosphate. This chain is Glycine--tRNA ligase beta subunit, found in Shewanella oneidensis (strain ATCC 700550 / JCM 31522 / CIP 106686 / LMG 19005 / NCIMB 14063 / MR-1).